Consider the following 116-residue polypeptide: Nucleoid-associated protein P9301_00191 (116 aa).

This sequence belongs to the YbaB/EbfC family. In terms of assembly, homodimer.

The protein resides in the cytoplasm. The protein localises to the nucleoid. In terms of biological role, binds to DNA and alters its conformation. May be involved in regulation of gene expression, nucleoid organization and DNA protection. The polypeptide is Nucleoid-associated protein P9301_00191 (Prochlorococcus marinus (strain MIT 9301)).